Here is a 232-residue protein sequence, read N- to C-terminus: 7-cyano-7-deazaguanine synthase (232 aa).

8-18 (FSGGQDSTTCL) contacts ATP. Positions 189, 198, 201, and 204 each coordinate Zn(2+).

This sequence belongs to the QueC family. Zn(2+) serves as cofactor.

The enzyme catalyses 7-carboxy-7-deazaguanine + NH4(+) + ATP = 7-cyano-7-deazaguanine + ADP + phosphate + H2O + H(+). Its pathway is purine metabolism; 7-cyano-7-deazaguanine biosynthesis. Functionally, catalyzes the ATP-dependent conversion of 7-carboxy-7-deazaguanine (CDG) to 7-cyano-7-deazaguanine (preQ(0)). This chain is 7-cyano-7-deazaguanine synthase, found in Proteus mirabilis (strain HI4320).